Here is a 268-residue protein sequence, read N- to C-terminus: 1D-myo-inositol 2-acetamido-2-deoxy-alpha-D-glucopyranoside deacetylase (268 aa).

H7, D10, and H142 together coordinate Zn(2+).

This sequence belongs to the MshB deacetylase family. It depends on Zn(2+) as a cofactor.

It catalyses the reaction 1D-myo-inositol 2-acetamido-2-deoxy-alpha-D-glucopyranoside + H2O = 1D-myo-inositol 2-amino-2-deoxy-alpha-D-glucopyranoside + acetate. Its function is as follows. Catalyzes the deacetylation of 1D-myo-inositol 2-acetamido-2-deoxy-alpha-D-glucopyranoside (GlcNAc-Ins) in the mycothiol biosynthesis pathway. The protein is 1D-myo-inositol 2-acetamido-2-deoxy-alpha-D-glucopyranoside deacetylase of Saccharomonospora viridis (strain ATCC 15386 / DSM 43017 / JCM 3036 / CCUG 5913 / NBRC 12207 / NCIMB 9602 / P101) (Thermoactinomyces viridis).